The chain runs to 262 residues: 3-methyl-2-oxobutanoate hydroxymethyltransferase (262 aa).

Mg(2+) is bound by residues Asp42 and Asp81. 3-methyl-2-oxobutanoate is bound by residues 42–43 (DS), Asp81, and Lys110. Glu112 contacts Mg(2+). Glu180 acts as the Proton acceptor in catalysis.

It belongs to the PanB family. In terms of assembly, homodecamer; pentamer of dimers. It depends on Mg(2+) as a cofactor.

Its subcellular location is the cytoplasm. The catalysed reaction is 3-methyl-2-oxobutanoate + (6R)-5,10-methylene-5,6,7,8-tetrahydrofolate + H2O = 2-dehydropantoate + (6S)-5,6,7,8-tetrahydrofolate. The protein operates within cofactor biosynthesis; (R)-pantothenate biosynthesis; (R)-pantoate from 3-methyl-2-oxobutanoate: step 1/2. Functionally, catalyzes the reversible reaction in which hydroxymethyl group from 5,10-methylenetetrahydrofolate is transferred onto alpha-ketoisovalerate to form ketopantoate. The polypeptide is 3-methyl-2-oxobutanoate hydroxymethyltransferase (Legionella pneumophila (strain Paris)).